Consider the following 355-residue polypeptide: Protein-glutamate methylesterase/protein-glutamine glutaminase 3 (355 aa).

Positions 8–123 constitute a Response regulatory domain; sequence SVLIVDDSGM…AREVEDFVDK (116 aa). Residue D59 is modified to 4-aspartylphosphate. Residues 139–161 are disordered; the sequence is RSAPAAGPTPVPQAPPPPAAPPA. Over residues 145–159 the composition is skewed to pro residues; sequence GPTPVPQAPPPPAAP. The 191-residue stretch at 160-350 folds into the CheB-type methylesterase domain; the sequence is PAGDGGIIAI…ASLLEITGAS (191 aa). Active-site residues include S172, H199, and D292.

The protein belongs to the CheB family. In terms of processing, phosphorylated by CheA. Phosphorylation of the N-terminal regulatory domain activates the methylesterase activity.

It localises to the cytoplasm. It carries out the reaction [protein]-L-glutamate 5-O-methyl ester + H2O = L-glutamyl-[protein] + methanol + H(+). The enzyme catalyses L-glutaminyl-[protein] + H2O = L-glutamyl-[protein] + NH4(+). In terms of biological role, involved in chemotaxis. Part of a chemotaxis signal transduction system that modulates chemotaxis in response to various stimuli. Catalyzes the demethylation of specific methylglutamate residues introduced into the chemoreceptors (methyl-accepting chemotaxis proteins or MCP) by CheR. Also mediates the irreversible deamidation of specific glutamine residues to glutamic acid. The polypeptide is Protein-glutamate methylesterase/protein-glutamine glutaminase 3 (Paramagnetospirillum magneticum (strain ATCC 700264 / AMB-1) (Magnetospirillum magneticum)).